The sequence spans 242 residues: tRNA pseudouridine synthase A (242 aa).

The active-site Nucleophile is Asp-51. Tyr-107 is a substrate binding site.

This sequence belongs to the tRNA pseudouridine synthase TruA family. As to quaternary structure, homodimer.

It catalyses the reaction uridine(38/39/40) in tRNA = pseudouridine(38/39/40) in tRNA. In terms of biological role, formation of pseudouridine at positions 38, 39 and 40 in the anticodon stem and loop of transfer RNAs. This chain is tRNA pseudouridine synthase A, found in Helicobacter pylori (strain HPAG1).